The primary structure comprises 761 residues: Zinc finger protein 711 (761 aa).

Glycyl lysine isopeptide (Lys-Gly) (interchain with G-Cter in SUMO2) cross-links involve residues Lys-224, Lys-235, and Lys-296. C2H2-type zinc fingers lie at residues 383 to 408 (YPCH…HPDH), 414 to 436 (YQCT…LESH), 476 to 499 (HKCK…LAVH), 505 to 527 (HVCV…MRTH), and 533 to 556 (YQCQ…KSKH). The C2H2-type 6; atypical zinc finger occupies 562-584 (YKCEHCPQAFGDERELQRHLDLF). Residues Cys-564, Cys-567, and His-580 each coordinate Zn(2+). C2H2-type zinc fingers lie at residues 590–613 (HQCP…ISVH), 619–641 (HKCE…SDIH), 647–670 (HQCR…LSVH), 676–698 (LKCK…MKTH), 704–727 (YQCE…ISIH), and 733–755 (HRCE…IMRH).

It belongs to the krueppel C2H2-type zinc-finger protein family. In terms of assembly, interacts with PHF8.

It is found in the nucleus. Transcription regulator required for brain development. Probably acts as a transcription factor that binds to the promoter of target genes and recruits PHF8 histone demethylase, leading to activated expression of genes involved in neuron development, such as KDM5C. May compete with transcription factor ARX for activation of expression of KDM5C. This chain is Zinc finger protein 711 (Znf711), found in Mus musculus (Mouse).